Here is a 169-residue protein sequence, read N- to C-terminus: Shikimate kinase (169 aa).

13-18 contributes to the ATP binding site; the sequence is GAGKST. Ser17 lines the Mg(2+) pocket. Asp35, Arg59, and Gly80 together coordinate substrate. ATP is bound at residue Arg117. Arg136 lines the substrate pocket. Arg153 contributes to the ATP binding site.

This sequence belongs to the shikimate kinase family. In terms of assembly, monomer. It depends on Mg(2+) as a cofactor.

Its subcellular location is the cytoplasm. The enzyme catalyses shikimate + ATP = 3-phosphoshikimate + ADP + H(+). It functions in the pathway metabolic intermediate biosynthesis; chorismate biosynthesis; chorismate from D-erythrose 4-phosphate and phosphoenolpyruvate: step 5/7. Functionally, catalyzes the specific phosphorylation of the 3-hydroxyl group of shikimic acid using ATP as a cosubstrate. This Corynebacterium efficiens (strain DSM 44549 / YS-314 / AJ 12310 / JCM 11189 / NBRC 100395) protein is Shikimate kinase.